We begin with the raw amino-acid sequence, 406 residues long: Phosphopentomutase (406 aa).

Residues D10, D305, H310, D346, H347, and H358 each contribute to the Mn(2+) site.

It belongs to the phosphopentomutase family. The cofactor is Mn(2+).

It is found in the cytoplasm. The enzyme catalyses 2-deoxy-alpha-D-ribose 1-phosphate = 2-deoxy-D-ribose 5-phosphate. The catalysed reaction is alpha-D-ribose 1-phosphate = D-ribose 5-phosphate. Its pathway is carbohydrate degradation; 2-deoxy-D-ribose 1-phosphate degradation; D-glyceraldehyde 3-phosphate and acetaldehyde from 2-deoxy-alpha-D-ribose 1-phosphate: step 1/2. Its function is as follows. Isomerase that catalyzes the conversion of deoxy-ribose 1-phosphate (dRib-1-P) and ribose 1-phosphate (Rib-1-P) to deoxy-ribose 5-phosphate (dRib-5-P) and ribose 5-phosphate (Rib-5-P), respectively. The protein is Phosphopentomutase of Rhizobium johnstonii (strain DSM 114642 / LMG 32736 / 3841) (Rhizobium leguminosarum bv. viciae).